The chain runs to 302 residues: Homoserine O-acetyltransferase (302 aa).

The active-site Acyl-thioester intermediate is the Cys142. Positions 163 and 192 each coordinate substrate. Catalysis depends on His235, which acts as the Proton acceptor. Glu237 is a catalytic residue. Substrate is bound at residue Arg249.

It belongs to the MetA family.

Its subcellular location is the cytoplasm. It catalyses the reaction L-homoserine + acetyl-CoA = O-acetyl-L-homoserine + CoA. Its pathway is amino-acid biosynthesis; L-methionine biosynthesis via de novo pathway; O-acetyl-L-homoserine from L-homoserine: step 1/1. Its function is as follows. Transfers an acetyl group from acetyl-CoA to L-homoserine, forming acetyl-L-homoserine. The polypeptide is Homoserine O-acetyltransferase (Bacillus licheniformis (strain ATCC 14580 / DSM 13 / JCM 2505 / CCUG 7422 / NBRC 12200 / NCIMB 9375 / NCTC 10341 / NRRL NRS-1264 / Gibson 46)).